A 316-amino-acid chain; its full sequence is Transaldolase A (316 aa).

Lys-131 functions as the Schiff-base intermediate with substrate in the catalytic mechanism.

The protein belongs to the transaldolase family. Type 1 subfamily. As to quaternary structure, homodimer.

It is found in the cytoplasm. The enzyme catalyses D-sedoheptulose 7-phosphate + D-glyceraldehyde 3-phosphate = D-erythrose 4-phosphate + beta-D-fructose 6-phosphate. It functions in the pathway carbohydrate degradation; pentose phosphate pathway; D-glyceraldehyde 3-phosphate and beta-D-fructose 6-phosphate from D-ribose 5-phosphate and D-xylulose 5-phosphate (non-oxidative stage): step 2/3. Transaldolase is important for the balance of metabolites in the pentose-phosphate pathway. In Salmonella typhimurium (strain LT2 / SGSC1412 / ATCC 700720), this protein is Transaldolase A.